A 288-amino-acid polypeptide reads, in one-letter code: Protein FANTASTIC FOUR 3 (288 aa).

Over residues 48-60 (HAEDTRNRNDDKA) the composition is skewed to basic and acidic residues. Disordered stretches follow at residues 48-100 (HAED…YYVQ), 146-172 (ETTTETRTLKSRKRSVSPSDLPPPLTT), and 222-261 (NEFVENEEETIEPEETEEYEEEEEEEEDEDEDEVMGIENV). The span at 66–90 (SDSSGWSSLQSLSSGSSSSTKTTTS) shows a compositional bias: low complexity. Positions 165 to 217 (DLPPPLTTMRGFQCIQMRPHRENGRLVMTATNAPPRNGCFQADRSNGRLRLSI) constitute an FAF domain. Over residues 223–256 (EFVENEEETIEPEETEEYEEEEEEEEDEDEDEVM) the composition is skewed to acidic residues.

The protein belongs to the fantastic four family. Expressed in the shoot apex, stamens, young leaves and young siliques, but not in old leaves. Detected in provascular and vascular tissue, but not in the vegetative meristem. In inflorescences, restricted to the vasculature and absent from young flowers, except from anthers.

Its function is as follows. Able to repress WUS when constitutively overexpressed, but have no effect on CLV3. The polypeptide is Protein FANTASTIC FOUR 3 (FAF3) (Arabidopsis thaliana (Mouse-ear cress)).